Reading from the N-terminus, the 760-residue chain is RxLR effector protein PSR2 (760 aa).

The signal sequence occupies residues 1–21 (MGCRYAVLALAVAYFAGSIAA). Residues 47–62 (RFLRAANTADERNEDR) carry the RxLR-dEER motif. Residues 87–134 (PLLSWFEKKKSPDYVFLKLKINKGKQQLFDHPDWNVWVQYTTSVVKSD) form a WY1 repeat. The 7 X 93 AA tandem repeats stretch occupies residues 87-760 (PLLSWFEKKK…TTKYMERYGQ (674 aa)). One copy of the LWY2 repeat lies at 135 to 221 (PEEAMIAALR…MKLYNSKPVN (87 aa)). The LWY3 repeat unit spans residues 222 to 312 (KKQQVTLVSM…KYVDNYNRDF (91 aa)). An LWY4 repeat occupies 313–403 (PDEATTVMAT…KYVEDLNLKP (91 aa)). The stretch at 404 to 496 (EHNDLQVSII…KFLEHYYKSF (93 aa)) is one LWY5 repeat. An LWY6 repeat occupies 497–584 (PTPMMSALAK…RYLDEFNKKF (88 aa)). Residues 585 to 760 (PDEKVSMTDT…TTKYMERYGQ (176 aa)) form an LWY7 repeat.

It belongs to the RxLR effector family. As to quaternary structure, interacts with host dsRNA-binding protein DRB4.

It localises to the secreted. Its subcellular location is the host cell. Functionally, secreted effector that possesses RNA silencing suppression activity by inhibiting the biogenesis of small RNAs in the host plant to promote enhanced susceptibility of host to the pathogen during infection. Interferes with secondary siRNA production by associating with host dsRNA-binding protein DRB4. Inhibits the host salicylic acid pathway during infection. The protein is RxLR effector protein PSR2 of Phytophthora infestans (strain T30-4) (Potato late blight agent).